A 616-amino-acid polypeptide reads, in one-letter code: Dihydroxy-acid dehydratase (616 aa).

Asp-81 lines the Mg(2+) pocket. Cys-122 is a binding site for [2Fe-2S] cluster. Mg(2+)-binding residues include Asp-123 and Lys-124. Lys-124 carries the post-translational modification N6-carboxylysine. Cys-195 serves as a coordination point for [2Fe-2S] cluster. Glu-491 serves as a coordination point for Mg(2+). The active-site Proton acceptor is the Ser-517.

Belongs to the IlvD/Edd family. Homodimer. The cofactor is [2Fe-2S] cluster. Mg(2+) serves as cofactor.

It carries out the reaction (2R)-2,3-dihydroxy-3-methylbutanoate = 3-methyl-2-oxobutanoate + H2O. It catalyses the reaction (2R,3R)-2,3-dihydroxy-3-methylpentanoate = (S)-3-methyl-2-oxopentanoate + H2O. The protein operates within amino-acid biosynthesis; L-isoleucine biosynthesis; L-isoleucine from 2-oxobutanoate: step 3/4. It functions in the pathway amino-acid biosynthesis; L-valine biosynthesis; L-valine from pyruvate: step 3/4. Functions in the biosynthesis of branched-chain amino acids. Catalyzes the dehydration of (2R,3R)-2,3-dihydroxy-3-methylpentanoate (2,3-dihydroxy-3-methylvalerate) into 2-oxo-3-methylpentanoate (2-oxo-3-methylvalerate) and of (2R)-2,3-dihydroxy-3-methylbutanoate (2,3-dihydroxyisovalerate) into 2-oxo-3-methylbutanoate (2-oxoisovalerate), the penultimate precursor to L-isoleucine and L-valine, respectively. This chain is Dihydroxy-acid dehydratase, found in Yersinia pseudotuberculosis serotype O:1b (strain IP 31758).